Reading from the N-terminus, the 413-residue chain is Alpha-1-antiproteinase (413 aa).

An N-terminal signal peptide occupies residues 1 to 24; sequence MTPSISWRLLLLAGLCCLVPSYLA. Ser33 carries the phosphoserine modification. Residues Asn64, Asn101, and Asn265 are each glycosylated (N-linked (GlcNAc...) asparagine). The segment at 368–387 is RCL; sequence ATTIVEAVFMSLPPILHFNH. Phosphoserine is present on Ser378.

It belongs to the serpin family. As to quaternary structure, interacts with CELA2A. Interacts with ERGIC3 and LMAN1/ERGIC53. Interacts with PRSS1/Trypsin.

Its subcellular location is the secreted. Functionally, inhibitor of serine proteases. The primary target is elastase, but also has a moderate affinity for plasmin and thrombin. The chain is Alpha-1-antiproteinase (Serpina1) from Mus saxicola (Brown spiny mouse).